The sequence spans 266 residues: Mitochondrial S-adenosylmethionine carrier protein (266 aa).

3 Solcar repeats span residues 4–77 (RELC…AKRF), 85–167 (LSPI…LKNL), and 176–264 (VDCW…VRSS). 6 helical membrane-spanning segments follow: residues 5–25 (ELCASLLAGGAAGMSVDLILF), 49–69 (IYAGVPSTAVGSFPNAAAFFV), 84–104 (YLSPIIHMAAAFLGELVACLI), 141–161 (RGYKSTVLREIPFSLVQFPLW), 181–201 (SAVCGAFAGGFAAAVTTPLDV), and 237–257 (FAGVIPRMTMISLGGFIFLGA).

The protein belongs to the mitochondrial carrier (TC 2.A.29) family.

It localises to the mitochondrion inner membrane. The catalysed reaction is S-adenosyl-L-homocysteine(out) + S-adenosyl-L-methionine(in) = S-adenosyl-L-homocysteine(in) + S-adenosyl-L-methionine(out). Mitochondrial S-adenosyl-L-methionine/S-adenosyl-L-homocysteine antiporter. Mediates the exchange of cytosolic S-adenosyl-L-methionine, the predominant methyl-group donor for macromolecule methylation processes, for mitochondrial S-adenosylhomocysteine(SAH), a by-product of methylation reactions. This Xenopus laevis (African clawed frog) protein is Mitochondrial S-adenosylmethionine carrier protein (slc25a26).